The chain runs to 251 residues: tRNA (guanine-N(7)-)-methyltransferase (251 aa).

4 residues coordinate S-adenosyl-L-methionine: glutamate 80, glutamate 105, aspartate 132, and aspartate 155. Residue aspartate 155 is part of the active site. Substrate-binding positions include lysine 159, aspartate 191, and 228 to 231 (TKFE).

This sequence belongs to the class I-like SAM-binding methyltransferase superfamily. TrmB family.

The catalysed reaction is guanosine(46) in tRNA + S-adenosyl-L-methionine = N(7)-methylguanosine(46) in tRNA + S-adenosyl-L-homocysteine. It functions in the pathway tRNA modification; N(7)-methylguanine-tRNA biosynthesis. In terms of biological role, catalyzes the formation of N(7)-methylguanine at position 46 (m7G46) in tRNA. The chain is tRNA (guanine-N(7)-)-methyltransferase from Histophilus somni (strain 2336) (Haemophilus somnus).